The primary structure comprises 70 residues: Protein SlyX homolog (70 aa).

This sequence belongs to the SlyX family.

The polypeptide is Protein SlyX homolog (Shewanella pealeana (strain ATCC 700345 / ANG-SQ1)).